The following is a 154-amino-acid chain: Lipoprotein signal peptidase (154 aa).

The next 3 membrane-spanning stretches (helical) occupy residues Ile4 to Ile24, Leu62 to Ile82, and Gly84 to Ile104. Active-site residues include Asp114 and Asp130. Residues Ile125–Trp145 traverse the membrane as a helical segment.

This sequence belongs to the peptidase A8 family.

Its subcellular location is the cell membrane. It carries out the reaction Release of signal peptides from bacterial membrane prolipoproteins. Hydrolyzes -Xaa-Yaa-Zaa-|-(S,diacylglyceryl)Cys-, in which Xaa is hydrophobic (preferably Leu), and Yaa (Ala or Ser) and Zaa (Gly or Ala) have small, neutral side chains.. The protein operates within protein modification; lipoprotein biosynthesis (signal peptide cleavage). Functionally, this protein specifically catalyzes the removal of signal peptides from prolipoproteins. This chain is Lipoprotein signal peptidase, found in Streptococcus agalactiae serotype Ia (strain ATCC 27591 / A909 / CDC SS700).